A 433-amino-acid chain; its full sequence is MTESVRLPVARLKPSTVALPGSKSISNRTLLLAALSDNACEIHSLLKSDDTDRMLEALDKLGVQIEYLAEDRLKVHGTGGRFPNRTADLFLGNAGTAFRPLTAALAVLGGDYHLHGVPRMHERPIGDLVDALRIAGADVEYLGKEHYPPLHIGERQDNGERVIPIKGNVSSQFLTALLMALPLTGQAFEIRMVGELISKPYIDITLKLMAQFGVQVINEGYRVFKIPADAHYHAPEHLHVEGDASSASYFLAAGLIAATPVRVTGIGANSIQGDVAFARELEKIGADVVWGENFVEVSRPKERAVQSFDLDANHIPDAAMTLAIVALATGQTCTLRNIGSWRVKETDRIAAMANELRKLGAKVVEEAEAIHITPPETLTPDAVIDTYDDHRMAMCFSLVSLLGVPVVINDPKCTHKTFPTYFDVFSSLTETAE.

3-phosphoshikimate-binding residues include K23, S24, and R28. K23 provides a ligand contact to phosphoenolpyruvate. Phosphoenolpyruvate is bound by residues G95 and R123. Residues S170, S171, Q172, S198, D317, and K344 each coordinate 3-phosphoshikimate. Residue Q172 participates in phosphoenolpyruvate binding. The active-site Proton acceptor is D317. 3 residues coordinate phosphoenolpyruvate: R348, R391, and K416.

Belongs to the EPSP synthase family. Monomer.

It is found in the cytoplasm. The enzyme catalyses 3-phosphoshikimate + phosphoenolpyruvate = 5-O-(1-carboxyvinyl)-3-phosphoshikimate + phosphate. It functions in the pathway metabolic intermediate biosynthesis; chorismate biosynthesis; chorismate from D-erythrose 4-phosphate and phosphoenolpyruvate: step 6/7. Catalyzes the transfer of the enolpyruvyl moiety of phosphoenolpyruvate (PEP) to the 5-hydroxyl of shikimate-3-phosphate (S3P) to produce enolpyruvyl shikimate-3-phosphate and inorganic phosphate. The polypeptide is 3-phosphoshikimate 1-carboxyvinyltransferase (Neisseria meningitidis serogroup B (strain ATCC BAA-335 / MC58)).